A 118-amino-acid polypeptide reads, in one-letter code: Protein TusC (118 aa).

This sequence belongs to the DsrF/TusC family. As to quaternary structure, heterohexamer, formed by a dimer of trimers. The hexameric TusBCD complex contains 2 copies each of TusB, TusC and TusD. The TusBCD complex interacts with TusE.

Its subcellular location is the cytoplasm. Its function is as follows. Part of a sulfur-relay system required for 2-thiolation of 5-methylaminomethyl-2-thiouridine (mnm(5)s(2)U) at tRNA wobble positions. The polypeptide is Protein TusC (Salmonella paratyphi C (strain RKS4594)).